A 146-amino-acid chain; its full sequence is Small ribosomal subunit protein bS6 (146 aa).

Residues 94–146 (GPITTPSPMMQEGKSRPPHSSDEDSENTAPAKAKTADSPGEDTRTTEESDPKP) form a disordered region. 2 stretches are compositionally biased toward basic and acidic residues: residues 106 to 115 (GKSRPPHSSD) and 134 to 146 (EDTR…DPKP).

This sequence belongs to the bacterial ribosomal protein bS6 family.

In terms of biological role, binds together with bS18 to 16S ribosomal RNA. The protein is Small ribosomal subunit protein bS6 of Nitrosomonas europaea (strain ATCC 19718 / CIP 103999 / KCTC 2705 / NBRC 14298).